The sequence spans 411 residues: Dihydrofolate synthase/folylpolyglutamate synthase (411 aa).

53–56 (GKGT) lines the ATP pocket. Residue serine 77 participates in Mg(2+) binding. 7,8-dihydropteroate contacts are provided by residues 116–119 (TYFE) and 147–149 (LDA). Histidine 167 is a binding site for Mg(2+). Positions 283 and 296 each coordinate ATP.

The protein belongs to the folylpolyglutamate synthase family. Monomer. Requires Mg(2+) as cofactor.

It catalyses the reaction 7,8-dihydropteroate + L-glutamate + ATP = 7,8-dihydrofolate + ADP + phosphate + H(+). It carries out the reaction (6S)-5,6,7,8-tetrahydrofolyl-(gamma-L-Glu)(n) + L-glutamate + ATP = (6S)-5,6,7,8-tetrahydrofolyl-(gamma-L-Glu)(n+1) + ADP + phosphate + H(+). The catalysed reaction is 10-formyltetrahydrofolyl-(gamma-L-Glu)(n) + L-glutamate + ATP = 10-formyltetrahydrofolyl-(gamma-L-Glu)(n+1) + ADP + phosphate + H(+). The enzyme catalyses (6R)-5,10-methylenetetrahydrofolyl-(gamma-L-Glu)(n) + L-glutamate + ATP = (6R)-5,10-methylenetetrahydrofolyl-(gamma-L-Glu)(n+1) + ADP + phosphate + H(+). It functions in the pathway cofactor biosynthesis; tetrahydrofolate biosynthesis; 7,8-dihydrofolate from 2-amino-4-hydroxy-6-hydroxymethyl-7,8-dihydropteridine diphosphate and 4-aminobenzoate: step 2/2. It participates in cofactor biosynthesis; tetrahydrofolylpolyglutamate biosynthesis. In terms of biological role, functions in two distinct reactions of the de novo folate biosynthetic pathway. Catalyzes the addition of a glutamate residue to dihydropteroate (7,8-dihydropteroate or H2Pte) to form dihydrofolate (7,8-dihydrofolate monoglutamate or H2Pte-Glu). Also catalyzes successive additions of L-glutamate to tetrahydrofolate or 10-formyltetrahydrofolate or 5,10-methylenetetrahydrofolate, leading to folylpolyglutamate derivatives. The chain is Dihydrofolate synthase/folylpolyglutamate synthase (folC) from Buchnera aphidicola subsp. Acyrthosiphon pisum (strain APS) (Acyrthosiphon pisum symbiotic bacterium).